We begin with the raw amino-acid sequence, 140 residues long: Small ribosomal subunit protein eS17y (140 aa).

Belongs to the eukaryotic ribosomal protein eS17 family.

The sequence is that of Small ribosomal subunit protein eS17y (RPS17B) from Arabidopsis thaliana (Mouse-ear cress).